The chain runs to 338 residues: 1-aminocyclopropane-1-carboxylate deaminase (338 aa).

N6-(pyridoxal phosphate)lysine is present on lysine 51. Residue serine 78 is the Nucleophile of the active site.

This sequence belongs to the ACC deaminase/D-cysteine desulfhydrase family. Homotrimer. It depends on pyridoxal 5'-phosphate as a cofactor.

It catalyses the reaction 1-aminocyclopropane-1-carboxylate + H2O = 2-oxobutanoate + NH4(+). Its function is as follows. Catalyzes a cyclopropane ring-opening reaction, the irreversible conversion of 1-aminocyclopropane-1-carboxylate (ACC) to ammonia and alpha-ketobutyrate. Allows growth on ACC as a nitrogen source. The sequence is that of 1-aminocyclopropane-1-carboxylate deaminase from Burkholderia thailandensis (strain ATCC 700388 / DSM 13276 / CCUG 48851 / CIP 106301 / E264).